Reading from the N-terminus, the 304-residue chain is Methionyl-tRNA formyltransferase (304 aa).

110-113 (SLLP) is a binding site for (6S)-5,6,7,8-tetrahydrofolate.

It belongs to the Fmt family.

The enzyme catalyses L-methionyl-tRNA(fMet) + (6R)-10-formyltetrahydrofolate = N-formyl-L-methionyl-tRNA(fMet) + (6S)-5,6,7,8-tetrahydrofolate + H(+). Functionally, attaches a formyl group to the free amino group of methionyl-tRNA(fMet). The formyl group appears to play a dual role in the initiator identity of N-formylmethionyl-tRNA by promoting its recognition by IF2 and preventing the misappropriation of this tRNA by the elongation apparatus. The sequence is that of Methionyl-tRNA formyltransferase from Gluconobacter oxydans (strain 621H) (Gluconobacter suboxydans).